The following is a 300-amino-acid chain: Bifunctional protein FolD 2 (300 aa).

Residues 165–167, Ser190, and Ile231 contribute to the NADP(+) site; that span reads GRS.

This sequence belongs to the tetrahydrofolate dehydrogenase/cyclohydrolase family. In terms of assembly, homodimer.

The enzyme catalyses (6R)-5,10-methylene-5,6,7,8-tetrahydrofolate + NADP(+) = (6R)-5,10-methenyltetrahydrofolate + NADPH. It catalyses the reaction (6R)-5,10-methenyltetrahydrofolate + H2O = (6R)-10-formyltetrahydrofolate + H(+). Its pathway is one-carbon metabolism; tetrahydrofolate interconversion. In terms of biological role, catalyzes the oxidation of 5,10-methylenetetrahydrofolate to 5,10-methenyltetrahydrofolate and then the hydrolysis of 5,10-methenyltetrahydrofolate to 10-formyltetrahydrofolate. The protein is Bifunctional protein FolD 2 of Pseudomonas syringae pv. tomato (strain ATCC BAA-871 / DC3000).